The following is a 165-amino-acid chain: Histone H1 (165 aa).

The segment at 1–165 is disordered; it reads GKQSTSKSVT…KKATKGSKKN (165 aa). Residues 9–18 are compositionally biased toward basic and acidic residues; that stretch reads VTREKKDVKK. The segment covering 20–31 has biased composition (basic residues); sequence VAPKKAIKKVTK. The segment covering 32-41 has biased composition (low complexity); that stretch reads KSTTPVKTSK. A phosphothreonine mark is found at Thr48 and Thr54. Positions 68-89 are enriched in basic and acidic residues; that stretch reads TMKESVSDAKKTVHKSAGDKKL. At Ser83 the chain carries Phosphoserine. The span at 103–117 shows a compositional bias: basic residues; it reads KIVHPAKKAAAKPKT. At Thr117 the chain carries Phosphothreonine. The span at 118-157 shows a compositional bias: basic and acidic residues; the sequence is AKKEVKKDTKPVKKDAKKDTKPVKKDAKKDTKPAKKDTKK.

In terms of processing, cell-growth/division-associated phosphorylation by a CDC2-like kinase. Is additionally phosphorylated on either Ser-33, Thr-34 or Thr-35, and on either Thr-39 or Ser-40.

It is found in the nucleus. It localises to the chromosome. Histones H1 are necessary for the condensation of nucleosome chains into higher-order structures. This chain is Histone H1 (HHO), found in Tetrahymena pyriformis.